A 134-amino-acid chain; its full sequence is MVKVVNSSGKHKTATARATVMKGTGKVRINKIPLELYTPELAMMKISEPLLIAGNDVVSGLDINVDVRGGGIIGQANAVRTAVARGIVEWTNDTAIRDNFAAYDRNLLVSDSRQKESKNFGGPGARAKYQKSYR.

The segment at 114-134 (QKESKNFGGPGARAKYQKSYR) is disordered.

This sequence belongs to the universal ribosomal protein uS9 family.

The polypeptide is Small ribosomal subunit protein uS9 (Methanosarcina acetivorans (strain ATCC 35395 / DSM 2834 / JCM 12185 / C2A)).